Here is a 396-residue protein sequence, read N- to C-terminus: Imidazolonepropionase (396 aa).

The Fe(3+) site is built by H70 and H72. The Zn(2+) site is built by H70 and H72. The 4-imidazolone-5-propanoate site is built by R79, Y137, and H164. N-formimidoyl-L-glutamate is bound at residue Y137. A Fe(3+)-binding site is contributed by H227. H227 is a Zn(2+) binding site. Q230 is a binding site for 4-imidazolone-5-propanoate. D301 provides a ligand contact to Fe(3+). D301 lines the Zn(2+) pocket. 2 residues coordinate N-formimidoyl-L-glutamate: N303 and G305. Residue S306 coordinates 4-imidazolone-5-propanoate.

The protein belongs to the metallo-dependent hydrolases superfamily. HutI family. The cofactor is Zn(2+). Requires Fe(3+) as cofactor.

It localises to the cytoplasm. The enzyme catalyses 4-imidazolone-5-propanoate + H2O = N-formimidoyl-L-glutamate. Its pathway is amino-acid degradation; L-histidine degradation into L-glutamate; N-formimidoyl-L-glutamate from L-histidine: step 3/3. Its function is as follows. Catalyzes the hydrolytic cleavage of the carbon-nitrogen bond in imidazolone-5-propanoate to yield N-formimidoyl-L-glutamate. It is the third step in the universal histidine degradation pathway. In Mycolicibacterium smegmatis (strain ATCC 700084 / mc(2)155) (Mycobacterium smegmatis), this protein is Imidazolonepropionase.